A 694-amino-acid chain; its full sequence is E3 ubiquitin-protein ligase SPL11 (694 aa).

Positions 1–12 (MAGDRAEEEEGE) are enriched in acidic residues. Disordered regions lie at residues 1–21 (MAGDRAEEEEGEAPPPEARAA) and 343–363 (NGMEPPKRSTQPNKPTPACSS). Residues 272-346 (TIPDEFRCPI…SQWCETNGME (75 aa)) form the U-box domain. The span at 350 to 363 (RSTQPNKPTPACSS) shows a compositional bias: polar residues. 6 ARM repeats span residues 398-438 (NANN…NLSI), 439-479 (HEDN…SLSV), 480-520 (IDEY…NLCI), 521-561 (YQGN…ILSS), 562-602 (HPEG…HLCS), and 603-650 (GEHH…FLVQ). The span at 650-667 (QQQEEQESQSQASAQVPP) shows a compositional bias: low complexity. The tract at residues 650–694 (QQQEEQESQSQASAQVPPQATPEQVPENDIPEQLDSPASQYPMVV) is disordered.

In terms of assembly, interacts with SPIN1 (via N-terminus). Highly expressed in leaf, at intermediate levels in shoot and weakly in root.

The protein localises to the nucleus. It is found in the cytoplasm. The enzyme catalyses S-ubiquitinyl-[E2 ubiquitin-conjugating enzyme]-L-cysteine + [acceptor protein]-L-lysine = [E2 ubiquitin-conjugating enzyme]-L-cysteine + N(6)-ubiquitinyl-[acceptor protein]-L-lysine.. It participates in protein modification; protein ubiquitination. Functionally, E3 ubiquitin-protein ligase that negatively regulates programmed cell death and disease resistance. Participates in flowering time control by mediating ubiquitination and subsequent proteasomal degradation of SPIN1. This Oryza sativa subsp. japonica (Rice) protein is E3 ubiquitin-protein ligase SPL11 (SPL11).